The primary structure comprises 1098 residues: MGSKERFHWQSHNVKQSGVDDMVLLPQITEDAIAANLRKRFMDDYIFTYIGSVLISVNPFKQMPYFTDREIDLYQGAAQYENPPHIYALTDNMYRNMLIDCENQCVIISGESGAGKTVAAKYIMGYISKVSGGGEKVQHVKDIILQSNPLLEAFGNAKTVRNNNSSRFGKYFEIQFSRGGEPDGGKISNFLLEKSRVVMQNENERNFHIYYQLLEGASQEQRQNLGLMTPDYYYYLNQSDTYQVDGTDDRSDFGETLSAMQVIGIPPSIQQLVLQLVAGILHLGNISFCEDGNYARVESVDLLAFPAYLLGIDSGRLQEKLTSRKMDSRWGGRSESINVTLNVEQAAYTRDALAKGLYARLFDFLVEAINRAMQKPQEEYSIGVLDIYGFEIFQKNGFEQFCINFVNEKLQQIFIELTLKAEQEEYVQEGIRWTPIQYFNNKVVCDLIENKLSPPGIMSVLDDVCATMHATGGGADQTLLQKLQAAVGTHEHFNSWSAGFVIHHYAGKVSYDVSGFCERNRDVLFSDLIELMQTSEQAFLRMLFPEKLDGDKKGRPSTAGSKIKKQANDLVATLMRCTPHYIRCIKPNETKRPRDWEENRVKHQVEYLGLKENIRVRRAGFAYRRQFAKFLQRYAILTPETWPRWRGDERQGVQHLLRAVNMEPDQYQMGSTKVFVKNPESLFLLEEVRERKFDGFARTIQKAWRRHVAVRKYEEMREEASNILLNKKERRRNSINRNFVGDYLGLEERPELRQFLGKRERVDFADSVTKYDRRFKPIKRDLILTPKCVYVIGREKVKKGPEKGQVCEVLKKKVDIQALRGVSLSTRQDDFFILQEDAADSFLESVFKTEFVSLLCKRFEEATRRPLPLTFSDTLQFRVKKEGWGGGGTRSVTFSRGFGDLAVLKVGGRTLTVSVGDGLPKSSKPTRKGMAKGKPRRSSQAPTRAAPAPPRGMDRNGVPPSARGGPLPLEIMSGGGTHRPPRGPPSTSLGASRRPRARPPSEHNTEFLNVPDQGMAGMQRKRSVGQRPVPGVGRPKPQPRTHGPRCRALYQYVGQDVDELSFNVNEVIEILMEDPSGWWKGRLHGQEGLFPGNYVEKI.

The 674-residue stretch at 17-690 (SGVDDMVLLP…SLFLLEEVRE (674 aa)) folds into the Myosin motor domain. 110 to 117 (GESGAGKT) contacts ATP. Positions 579–589 (PHYIRCIKPNE) are actin-binding. The 30-residue stretch at 693 to 722 (FDGFARTIQKAWRRHVAVRKYEEMREEASN) folds into the IQ domain. The 190-residue stretch at 728–917 (KERRRNSINR…GRTLTVSVGD (190 aa)) folds into the TH1 domain. 2 disordered regions span residues 913–1009 (VSVG…EFLN) and 1021–1044 (KRSV…THGP). Basic residues predominate over residues 924-937 (KPTRKGMAKGKPRR). Ser-1023 is subject to Phosphoserine. In terms of domain architecture, SH3 spans 1041-1098 (THGPRCRALYQYVGQDVDELSFNVNEVIEILMEDPSGWWKGRLHGQEGLFPGNYVEKI).

This sequence belongs to the TRAFAC class myosin-kinesin ATPase superfamily. Myosin family.

Functionally, myosins are actin-based motor molecules with ATPase activity. Unconventional myosins serve in intracellular movements. Their highly divergent tails are presumed to bind to membranous compartments, which would be moved relative to actin filaments. In Homo sapiens (Human), this protein is Unconventional myosin-If (MYO1F).